The following is an 870-amino-acid chain: Adhesin AWP1 (870 aa).

An N-terminal signal peptide occupies residues 1 to 18 (MSLITIFAFFIKATLVLS). Asn224 carries an N-linked (GlcNAc...) asparagine glycan. An intrachain disulfide couples Cys284 to Cys322. The tract at residues 329 to 835 (ITPSSSVEPS…TRQTSVIAPG (507 aa)) is disordered. The span at 331–566 (PSSSVEPSSS…SSSAVVPTSS (236 aa)) shows a compositional bias: low complexity. Over residues 567–576 (AGGGNGGDNG) the composition is skewed to gly residues. Residues 577–641 (QPGADGQPGA…PGAAGQPGAA (65 aa)) are compositionally biased toward low complexity. The segment covering 642–652 (GQPGAGSGGGS) has biased composition (gly residues). Asn669 is a glycosylation site (N-linked (GlcNAc...) asparagine). A compositionally biased stretch (gly residues) spans 675 to 721 (SGTGNGQAGSGQAGSGQVGSGQAGAGQAGSGQAGAGQAGSGQAGAGQ). Polar residues-rich tracts occupy residues 724–735 (LDNTASGQSEGG) and 792–801 (GSGTDQSSGR).

It localises to the secreted. The protein localises to the cell wall. Its function is as follows. May play a role in cell adhesion. The chain is Adhesin AWP1 from Candida glabrata (strain ATCC 2001 / BCRC 20586 / JCM 3761 / NBRC 0622 / NRRL Y-65 / CBS 138) (Yeast).